A 321-amino-acid chain; its full sequence is Transmembrane and ubiquitin-like domain-containing protein 2 (321 aa).

Residues 36–56 form a helical membrane-spanning segment; it reads VMVVAGVVVLILALVLAWLST. Disordered stretches follow at residues 87 to 131 and 145 to 170; these read LVAG…GGVE and KRQA…LPPS. Basic and acidic residues predominate over residues 104 to 120; that stretch reads EGNDEKAEEAGEGRGDS. The 74-residue stretch at 174 to 247 folds into the Ubiquitin-like domain; it reads ITVRLKFLND…IHCHRSPPGS (74 aa). Helical transmembrane passes span 266–286 and 295–315; these read LGVN…GVVW and FFTA…SFLV.

Its subcellular location is the membrane. The protein is Transmembrane and ubiquitin-like domain-containing protein 2 (TMUB2) of Homo sapiens (Human).